Reading from the N-terminus, the 367-residue chain is UDP-galactopyranose mutase (367 aa).

FAD contacts are provided by residues Phe-12, 31–32, Asn-39, and 56–57; these read EK and HI. Residue Phe-12 coordinates UDP-alpha-D-galactose. Asn-80, Thr-152, Trp-156, and Tyr-181 together coordinate UDP-alpha-D-galactose. An FAD-binding site is contributed by 212-213; it reads DF. Positions 268, 278, and 311 each coordinate UDP-alpha-D-galactose. Arg-340 provides a ligand contact to FAD. Residue Tyr-346 coordinates UDP-alpha-D-galactose. 347-352 contributes to the FAD binding site; it reads YDMHQV.

In terms of assembly, homodimer. Requires FAD as cofactor.

It carries out the reaction UDP-alpha-D-galactose = UDP-alpha-D-galactofuranose. It participates in bacterial outer membrane biogenesis; lipopolysaccharide biosynthesis. Its function is as follows. Catalyzes the interconversion through a 2-keto intermediate of uridine diphosphogalactopyranose (UDP-GalP) into uridine diphosphogalactofuranose (UDP-GalF). This Escherichia coli (strain K12) protein is UDP-galactopyranose mutase (glf).